Consider the following 303-residue polypeptide: Sulfate adenylyltransferase subunit 2 (303 aa).

The protein belongs to the PAPS reductase family. CysD subfamily. In terms of assembly, heterodimer composed of CysD, the smaller subunit, and CysN.

The catalysed reaction is sulfate + ATP + H(+) = adenosine 5'-phosphosulfate + diphosphate. It participates in sulfur metabolism; hydrogen sulfide biosynthesis; sulfite from sulfate: step 1/3. With CysN forms the ATP sulfurylase (ATPS) that catalyzes the adenylation of sulfate producing adenosine 5'-phosphosulfate (APS) and diphosphate, the first enzymatic step in sulfur assimilation pathway. APS synthesis involves the formation of a high-energy phosphoric-sulfuric acid anhydride bond driven by GTP hydrolysis by CysN coupled to ATP hydrolysis by CysD. This Akkermansia muciniphila (strain ATCC BAA-835 / DSM 22959 / JCM 33894 / BCRC 81048 / CCUG 64013 / CIP 107961 / Muc) protein is Sulfate adenylyltransferase subunit 2.